Here is a 315-residue protein sequence, read N- to C-terminus: DNA-directed RNA polymerase subunit alpha (315 aa).

The tract at residues 1–228 (MIGMEKPKIE…EHLELFISLT (228 aa)) is alpha N-terminal domain (alpha-NTD). Residues 245 to 315 (RNKLMEMTIE…FGLSLRQPDD (71 aa)) form an alpha C-terminal domain (alpha-CTD) region.

The protein belongs to the RNA polymerase alpha chain family. Homodimer. The RNAP catalytic core consists of 2 alpha, 1 beta, 1 beta' and 1 omega subunit. When a sigma factor is associated with the core the holoenzyme is formed, which can initiate transcription.

The enzyme catalyses RNA(n) + a ribonucleoside 5'-triphosphate = RNA(n+1) + diphosphate. Functionally, DNA-dependent RNA polymerase catalyzes the transcription of DNA into RNA using the four ribonucleoside triphosphates as substrates. The protein is DNA-directed RNA polymerase subunit alpha of Symbiobacterium thermophilum (strain DSM 24528 / JCM 14929 / IAM 14863 / T).